Consider the following 632-residue polypeptide: 1-deoxy-D-xylulose-5-phosphate synthase (632 aa).

Thiamine diphosphate is bound by residues histidine 79 and 120-122 (GHA). Mg(2+) is bound at residue aspartate 151. Thiamine diphosphate-binding positions include 152-153 (GS), asparagine 180, phenylalanine 292, and glutamate 376. Asparagine 180 contributes to the Mg(2+) binding site.

The protein belongs to the transketolase family. DXPS subfamily. Homodimer. Mg(2+) serves as cofactor. The cofactor is thiamine diphosphate.

It carries out the reaction D-glyceraldehyde 3-phosphate + pyruvate + H(+) = 1-deoxy-D-xylulose 5-phosphate + CO2. The protein operates within metabolic intermediate biosynthesis; 1-deoxy-D-xylulose 5-phosphate biosynthesis; 1-deoxy-D-xylulose 5-phosphate from D-glyceraldehyde 3-phosphate and pyruvate: step 1/1. Catalyzes the acyloin condensation reaction between C atoms 2 and 3 of pyruvate and glyceraldehyde 3-phosphate to yield 1-deoxy-D-xylulose-5-phosphate (DXP). This is 1-deoxy-D-xylulose-5-phosphate synthase from Azobacteroides pseudotrichonymphae genomovar. CFP2.